The primary structure comprises 253 residues: Serine/threonine-protein phosphatase 3 (253 aa).

Mn(2+) serves as cofactor. Post-translationally, phosphorylated by YegI.

The catalysed reaction is O-phospho-L-seryl-[protein] + H2O = L-seryl-[protein] + phosphate. It catalyses the reaction O-phospho-L-threonyl-[protein] + H2O = L-threonyl-[protein] + phosphate. With respect to regulation, activity dramatically decreases in the presence of the general protein phosphatase inhibitor sodium phosphate. Slightly inhibited by sodium fluoride. Activity decreases in the presence of the metal chelator EDTA. Functionally, PP2C-like phosphatase that can dephosphorylate YegI. In vitro, can hydrolyze p-nitrophenyl phosphate (pNPP) to p-nitrophenol. The polypeptide is Serine/threonine-protein phosphatase 3 (Escherichia coli (strain K12)).